Consider the following 113-residue polypeptide: Protein NATD1 (113 aa).

Residues 22-112 (EHDRRRRQFT…PLPQYLERLQ (91 aa)) enclose the N-acetyltransferase domain.

The protein belongs to the NATD1 family.

This chain is Protein NATD1 (NATD1), found in Homo sapiens (Human).